The primary structure comprises 319 residues: Probable enoyl-CoA hydratase alpha subunit (319 aa).

Residues 199–298 (FEAAKQRRLV…EIGMPVVLDW (100 aa)) form a DUF35 region.

Belongs to the thioester dehydratase family. Heterodimer composed of ChsH1 and ChsH2. Two heterodimers combine to form a heterotetramer. The complex interacts with Ltp2 via the DUF35 C-terminal region of ChsH2.

Functionally, probably involved in bile acid degradation. This is Probable enoyl-CoA hydratase alpha subunit from Thermomonospora curvata (strain ATCC 19995 / DSM 43183 / JCM 3096 / KCTC 9072 / NBRC 15933 / NCIMB 10081 / Henssen B9).